Reading from the N-terminus, the 196-residue chain is Carnitine operon protein CaiE (196 aa).

Positions 173–196 (TQPLRQMEGNRPRLQGTTDVAPKR) are disordered.

Belongs to the transferase hexapeptide repeat family.

Its pathway is amine and polyamine metabolism; carnitine metabolism. Functionally, overproduction of CaiE stimulates the activity of CaiB and CaiD. This is Carnitine operon protein CaiE from Escherichia coli (strain SMS-3-5 / SECEC).